A 119-amino-acid chain; its full sequence is Host cell factor C1 regulator 1 (119 aa).

A disordered region spans residues 1–34; the sequence is MILQQPLERGPQGRAQRDPRAASGASGGLDAREP. Positions 57 to 60 are interaction with HCFC1; it reads DHPY. Residues 91 to 100 carry the Nuclear export signal motif; the sequence is IPEALRLLRL.

In terms of assembly, interacts with HCFC1.

The protein resides in the cytoplasm. The protein localises to the nucleus. Regulates HCFC1 activity by modulating its subcellular localization. Overexpression of HCFC1R1 leads to accumulation of HCFC1 in the cytoplasm. HCFC1R1-mediated export may provide the pool of cytoplasmic HCFC1 required for import of virion-derived VP16 into the nucleus. The sequence is that of Host cell factor C1 regulator 1 (HCFC1R1) from Bos taurus (Bovine).